Consider the following 204-residue polypeptide: MNPTERITTPHKTGEAKVIIFSAPSGSGKSTIINYLLAQKLNLAFSISATSRPPRGNEKHGVEYFFLSPDEFRQRIANNEFLEYEEVYTDRFYGTLKAQVEKQLAAGQNVVFDVDVVGGCNIKKYYGERALSLFIQPPCIDELRRRLIGRGTDTPEVIESRIAKAEYELSFAPKFDKVIINDDLETAKAHALKVIKEFLGIDTE.

In terms of domain architecture, Guanylate kinase-like spans 16-196 (AKVIIFSAPS…AKAHALKVIK (181 aa)). Position 23–30 (23–30 (APSGSGKS)) interacts with ATP.

It belongs to the guanylate kinase family.

The protein resides in the cytoplasm. The catalysed reaction is GMP + ATP = GDP + ADP. Its function is as follows. Essential for recycling GMP and indirectly, cGMP. The polypeptide is Guanylate kinase (Bacteroides fragilis (strain ATCC 25285 / DSM 2151 / CCUG 4856 / JCM 11019 / LMG 10263 / NCTC 9343 / Onslow / VPI 2553 / EN-2)).